Reading from the N-terminus, the 87-residue chain is Small ribosomal subunit protein bS20 (87 aa).

The disordered stretch occupies residues 1-28 (MANIKSQQKRNRTNERARLRNKSVKSSL).

Belongs to the bacterial ribosomal protein bS20 family.

Its function is as follows. Binds directly to 16S ribosomal RNA. The polypeptide is Small ribosomal subunit protein bS20 (Mycobacterium marinum (strain ATCC BAA-535 / M)).